Reading from the N-terminus, the 140-residue chain is Interleukin-4 (140 aa).

Positions 1–20 are cleaved as a signal peptide; it reads MGLNPQLVVILLFFLECTRS. 3 disulfide bridges follow: C25–C107, C47–C87, and C69–C114. N-linked (GlcNAc...) asparagine glycosylation is found at N61, N91, and N117.

The protein belongs to the IL-4/IL-13 family. In terms of assembly, interacts with IL4R. Interacts with IL13RA1.

Its subcellular location is the secreted. In terms of biological role, cytokine secreted primarily by mast cells, T-cells, eosinophils, and basophils that plays a role in regulating antibody production, hematopoiesis and inflammation, and the development of effector T-cell responses. Induces the expression of class II MHC molecules on resting B-cells. Enhances both secretion and cell surface expression of IgE and IgG1. Also regulates the expression of the low affinity Fc receptor for IgE (CD23) on both lymphocytes and monocytes. Positively regulates IL31RA expression in macrophages. Stimulates autophagy in dendritic cells by interfering with mTORC1 signaling and through the induction of RUFY4. In addition, plays a critical role in higher functions of the normal brain, such as memory and learning. Upon binding to IL4, IL4R receptor dimerizes either with the common IL2R gamma chain/IL2RG to produce the type 1 signaling complex, located mainly on hematopoietic cells, or with the IL13RA1 to produce the type 2 complex, which is also expressed on nonhematopoietic cells. Engagement of both types of receptors initiates JAK3 and to a lower extend JAK1 phosphorylation leading to activation of the signal transducer and activator of transcription 6/STAT6. The sequence is that of Interleukin-4 (Il4) from Mus musculus (Mouse).